The primary structure comprises 215 residues: Sodium channel regulatory subunit beta-3 (215 aa).

Residues 1–22 (MPAFNRLFPLVSLVLIYWASVC) form the signal peptide. Residues 23–156 (FPVCVEVPSE…EEAGEDFTSV (134 aa)) are Extracellular-facing. The Ig-like C2-type domain maps to 24 to 138 (PVCVEVPSET…EAHRPFVKTT (115 aa)). 2 cysteine pairs are disulfide-bonded: Cys26-Cys48 and Cys45-Cys120. Residues Asn95, Asn109, Asn113, and Asn121 are each glycosylated (N-linked (GlcNAc...) asparagine). The chain crosses the membrane as a helical span at residues 157–178 (VSEIMMYILLVFLTLWLLIEMI). Residues 179–215 (YCYRKVSKAEEAAQENASDYLAIPSENKENSAVPVEE) are Cytoplasmic-facing.

Belongs to the sodium channel auxiliary subunit SCN3B (TC 8.A.17) family. In terms of assembly, a voltage-gated sodium (Nav) channel consists of an ion-conducting pore-forming alpha subunit functional on its own that is regulated by one or more beta subunits. Forms homodimers and homotrimers. SCN3B is non-covalently associated with alpha subunits and induces the formation of alpha subunit oligomers, including trimers. Interacts with SCN5A/Nav1.5; regulatory subunit of SCN5A/Nav1.5. Interacts with SCN7A/Nav2.1; probable regulatory subunit of SCN7A/Nav2.1. Interacts with SCN10A; regulatory subunit of SCN10A/Nav1.8. Interacts with NFASC; probably involved in targeting the sodium channels to the nodes of Ranvier. Intramolecular disulfide bonds favor the voltage-gated sodium channel oligomeric complex assembly. Post-translationally, N-glycosylated.

The protein resides in the cell membrane. Functionally, regulatory subunit of multiple voltage-gated sodium (Nav) channels directly mediating the depolarization of excitable membranes. Navs, also called VGSCs (voltage-gated sodium channels) or VDSCs (voltage-dependent sodium channels), operate by switching between closed and open conformations depending on the voltage difference across the membrane. In the open conformation they allow Na(+) ions to selectively pass through the pore, along their electrochemical gradient. The influx of Na+ ions provokes membrane depolarization, initiating the propagation of electrical signals throughout cells and tissues. The accessory beta subunits participate in localization and functional modulation of the Nav channels. Modulates the activity of SCN2A/Nav1.2, causing a hyperpolarizing shift in the voltage-dependence of inactivation of the channel and increasing the fraction of channels operating in the fast gating mode. Modulates the activity of SCN5A/Nav1.5. Could also regulate the atypical sodium channel SCN7A/Nav2.1. Modulates the activity of SCN10A/Nav1.8, regulating its oligomerization and accelerating the recovery from inactivation. The protein is Sodium channel regulatory subunit beta-3 of Macaca fascicularis (Crab-eating macaque).